A 263-amino-acid polypeptide reads, in one-letter code: Endolytic peptidoglycan transglycosylase RlpA (263 aa).

The signal sequence occupies residues 1 to 16 (MNRIYLYLLIVLILAG). Residue cysteine 17 is the site of N-palmitoyl cysteine attachment. Cysteine 17 is lipidated: S-diacylglycerol cysteine. The SPOR domain occupies 182–257 (KNNALEYVIQ…AGYDSAFIKT (76 aa)).

It belongs to the RlpA family.

It localises to the cell membrane. Its function is as follows. Lytic transglycosylase with a strong preference for naked glycan strands that lack stem peptides. The protein is Endolytic peptidoglycan transglycosylase RlpA of Vibrio cholerae serotype O1 (strain ATCC 39315 / El Tor Inaba N16961).